The primary structure comprises 178 residues: Cysteine protease inhibitor 7 (178 aa).

2 disulfides stabilise this stretch: Cys41-Cys93 and Cys141-Cys147.

Belongs to the protease inhibitor I3 (leguminous Kunitz-type inhibitor) family.

The protein localises to the vacuole. Functionally, inhibitor of cysteine proteases. May protect the plant by inhibiting proteases of invading organisms. The chain is Cysteine protease inhibitor 7 from Solanum tuberosum (Potato).